The following is a 120-amino-acid chain: cAMP-responsive element-binding protein-like 2 (120 aa).

Residues Met-1–Ile-24 are disordered. Basic residues predominate over residues Lys-10 to Pro-21. Residues Lys-23–Ser-86 enclose the bZIP domain. The basic motif stretch occupies residues Lys-29–Arg-60. The segment at Ile-62–Leu-69 is leucine-zipper. The disordered stretch occupies residues Thr-93–Trp-120.

It belongs to the bZIP family. ATF subfamily. Interacts with CREB1; regulates CREB1 phosphorylation, stability and transcriptional activity. Interacts with immediate-early (IE) protein BICP22 of bovine herpesvirus-1 (BHV-1). In terms of processing, phosphorylated by AMPK.

The protein resides in the nucleus. In terms of biological role, probable regulator of CREB1 transcriptional activity which is involved in adipose cells differentiation. May also play a regulatory role in the cell cycle. This Bos taurus (Bovine) protein is cAMP-responsive element-binding protein-like 2 (CREBL2).